The following is a 578-amino-acid chain: Acyl-coenzyme A synthetase ACSM5, mitochondrial (578 aa).

A mitochondrion-targeting transit peptide spans 1–22 (MRLWLRGLVYQARRSSWGVFRI). Lys-96 is modified (N6-acetyllysine; alternate). The residue at position 96 (Lys-96) is an N6-succinyllysine; alternate. At Lys-151 the chain carries N6-acetyllysine. Residue 229–237 (TSGTTGTPK) coordinates ATP. Lys-335 is subject to N6-acetyllysine. Residues 367-372 (EGYGQS), Asp-454, Arg-469, and Lys-565 contribute to the ATP site.

This sequence belongs to the ATP-dependent AMP-binding enzyme family. The cofactor is Mg(2+). Requires Mn(2+) as cofactor.

The protein resides in the mitochondrion matrix. It carries out the reaction a medium-chain fatty acid + ATP + CoA = a medium-chain fatty acyl-CoA + AMP + diphosphate. Its function is as follows. Catalyzes the activation of fatty acids by CoA to produce an acyl-CoA, the first step in fatty acid metabolism. In Rattus norvegicus (Rat), this protein is Acyl-coenzyme A synthetase ACSM5, mitochondrial (Acsm5).